The primary structure comprises 776 residues: E3 ubiquitin-protein ligase UHRF1 (776 aa).

The 78-residue stretch at 1–78 folds into the Ubiquitin-like domain; that stretch reads MWIQVRTMDG…VQLLVRQAVA (78 aa). The segment at 88-126 is disordered; sequence AELSDSDSGCGSAQSESDKGSTHGESDVQSAGASGQTDT. Residues 93–102 are compositionally biased toward polar residues; it reads SDSGCGSAQS. The span at 103–113 shows a compositional bias: basic and acidic residues; sequence ESDKGSTHGES. Residues 114-126 are compositionally biased toward polar residues; that stretch reads DVQSAGASGQTDT. Tudor-like stretches follow at residues 135 to 201 and 208 to 277; these read GFYK…PRAR and QLEP…IEEP. Residues 278–298 are disordered; that stretch reads GSAEGPGASSDSPLKKGSNGP. Residues 290–299 form a linker region; that stretch reads PLKKGSNGPE. The PHD-type zinc finger occupies 297–364; it reads GPECKVCKDD…DWYCPDCRND (68 aa). Histone H3R2me0 binding regions lie at residues 331–335 and 351–353; these read CDECD and PDD. In terms of domain architecture, YDG spans 417–580; the sequence is GPVPGVPVGT…FLVWRYLLKR (164 aa). The required to promote base flipping stretch occupies residues 443–444; it reads HV. Residues 461–462 and Asp-467 each bind DNA; that span reads AG. Required for formation of a 5-methylcytosine-binding pocket regions lie at residues 464–467 and 476–479; these read YEDD and YTGS. Positions 617 to 660 are disordered; the sequence is EKEKENKNEDDIEETPTKGKRKRKSQSMEEKSSPTKGTPKKMKV. At Ser-649 the chain carries Phosphoserine; by CDK2. The RING-type zinc finger occupies 706–745; the sequence is CICCQEVVYQPITTECQHNVCRECLQRSFKAKVYTCPACR.

In terms of processing, phosphorylation at Ser-649 is required for gastrulation. As to expression, expressed in proliferating tissues. Highly expressed 24-48 hours after fertilization (hpf) in rapidly proliferating tissues, including the tectum, retina and brachial arches. Preferentially expressed in the liver bud and expression is maintained in the fully developed liver. Also expressed in the proximal gut. In adult, the highest expression is detected in testis.

The protein localises to the nucleus. Its subcellular location is the cytoplasm. It carries out the reaction S-ubiquitinyl-[E2 ubiquitin-conjugating enzyme]-L-cysteine + [acceptor protein]-L-lysine = [E2 ubiquitin-conjugating enzyme]-L-cysteine + N(6)-ubiquitinyl-[acceptor protein]-L-lysine.. The protein operates within protein modification; protein ubiquitination. Functionally, multidomain protein that acts as a key epigenetic regulator by bridging DNA methylation and chromatin modification. Specifically recognizes and binds hemimethylated DNA at replication forks via its YDG domain and recruits dnmt1 methyltransferase to ensure faithful propagation of the DNA methylation patterns through DNA replication. In addition to its role in maintenance of DNA methylation, also plays a key role in chromatin modification: through its tudor-like regions and PHD-type zinc fingers, specifically recognizes and binds histone H3 trimethylated at 'Lys-9' (H3K9me3) and unmethylated at 'Arg-2' (H3R2me0), respectively, and recruits chromatin proteins. Enriched in pericentric heterochromatin where it recruits different chromatin modifiers required for this chromatin replication. Also localizes to euchromatic regions where it negatively regulates transcription possibly by impacting DNA methylation and histone modifications. Has E3 ubiquitin-protein ligase activity by mediating the ubiquitination of target proteins. However, it is still unclear how E3 ubiquitin-protein ligase activity is related to its role in chromatin in vivo. Required for pregastrula and lens development. The polypeptide is E3 ubiquitin-protein ligase UHRF1 (uhrf1) (Danio rerio (Zebrafish)).